Reading from the N-terminus, the 141-residue chain is ATP synthase epsilon chain (141 aa).

The protein belongs to the ATPase epsilon chain family. F-type ATPases have 2 components, CF(1) - the catalytic core - and CF(0) - the membrane proton channel. CF(1) has five subunits: alpha(3), beta(3), gamma(1), delta(1), epsilon(1). CF(0) has three main subunits: a, b and c.

The protein resides in the cell inner membrane. In terms of biological role, produces ATP from ADP in the presence of a proton gradient across the membrane. The protein is ATP synthase epsilon chain of Pseudomonas fluorescens (strain ATCC BAA-477 / NRRL B-23932 / Pf-5).